The chain runs to 305 residues: CRISPR-associated endonuclease Cas1 (305 aa).

The interval 96 to 278 (SDKLLYQAKL…EDVLAAGEIQ (183 aa)) is sufficient for cleavage of ssRNA, ssDNA and Holliday junction DNA. Residues glutamate 141, histidine 208, and aspartate 221 each coordinate Mg(2+). Residues 278–305 (QPPAPPEDAQPVAIPLPVSLGDAGHRSS) form a disordered region.

Belongs to the CRISPR-associated endonuclease Cas1 family. In terms of assembly, homodimer. Part of the Cas1-Cas2 complex. Interacts with RecB, RecC, RuvB, CasC and CasE. Forms a hexamer with 2 Cas1 dimers sandwiching a Cas2 dimer. The DNA lies across a flat surface extending from 1 Cas1 dimer, across the Cas2 dimer and contacting the other Cas1 dimer. Only 1 Cas1 protein from each dimer is catalytic, the other interacts with the Cas2 dimer and possibly target DNA. Mg(2+) is required as a cofactor.

Its subcellular location is the cytoplasm. With respect to regulation, nuclease activity partially inhibited by CasE. Its function is as follows. CRISPR (clustered regularly interspaced short palindromic repeat), is an adaptive immune system that provides protection against mobile genetic elements (viruses, transposable elements and conjugative plasmids). CRISPR clusters contain sequences complementary to antecedent mobile elements and target invading nucleic acids. CRISPR clusters are transcribed and processed into CRISPR RNA (crRNA). The Cas1-Cas2 complex is involved in CRISPR adaptation, the first stage of CRISPR immunity, being required for the addition/removal of CRISPR spacers at the leader end of the CRISPR locus. The Cas1-Cas2 complex introduces staggered nicks into both strands of the CRISPR array near the leader repeat and joins the 5'-ends of the repeat strands with the 3'-ends of the new spacer sequence. Spacer DNA integration requires supercoiled target DNA and 3'-OH ends on the inserted (spacer) DNA and probably initiates with a nucleophilic attack of the C 3'-OH end of the protospacer on the minus strand of the first repeat sequence. Expression of Cas1-Cas2 in a strain lacking both genes permits spacer acquisition. Non-specifically binds DNA; the Cas1-Cas2 complex preferentially binds CRISPR-locus DNA. Highest binding is seen to a dual forked DNA complex with 3'-overhangs and a protospacer-adjacent motif-complement specifically positioned. The protospacer DNA lies across a flat surface extending from 1 Cas1 dimer, across the Cas2 dimer and contacting the other Cas1 dimer; the 23 bp-long ds section of the DNA is bracketed by 1 Tyr-22 from each of the Cas1 dimers. Cas1 cuts within the 3'-overhang, to generate a 33-nucleotide DNA that is probably incorporated into the CRISPR leader by a cut-and-paste mechanism. Cas1 alone endonucleolytically cleaves linear ssRNA, ssDNA and short (34 base) dsDNA as well as branched DNA substrates such as Holliday junctions, replication forks and 5'-flap DNA substrates. In vitro catalyzes a concerted transesterification reaction on branched DNA, as would be expected during integration of protospacers into the CRISPR leader sequence; Cas2 is not required in vitro. This reaction requires a 3'-OH group at the branch point. Genetic interactions suggest Cas1 interacts with components of the RecBC and RuvB DNA repair systems. The polypeptide is CRISPR-associated endonuclease Cas1 (ygbT) (Escherichia coli (strain K12)).